The sequence spans 107 residues: Replication restart protein PriB (107 aa).

One can recognise an SSB domain in the interval 8-107 (IENRLSLIGV…LHAEHIELLD (100 aa)).

It belongs to the PriB family. As to quaternary structure, homodimer. Interacts with PriA and DnaT. Component of the replication restart primosome. Primosome assembly occurs via a 'hand-off' mechanism. PriA binds to replication forks, subsequently PriB then DnaT bind; DnaT then displaces ssDNA to generate the helicase loading substrate.

Functionally, involved in the restart of stalled replication forks, which reloads the replicative helicase on sites other than the origin of replication; the PriA-PriB pathway is the major replication restart pathway. During primosome assembly it facilitates complex formation between PriA and DnaT on DNA; stabilizes PriA on DNA. Stimulates the DNA unwinding activity of PriA helicase. The polypeptide is Replication restart protein PriB (Actinobacillus succinogenes (strain ATCC 55618 / DSM 22257 / CCUG 43843 / 130Z)).